Consider the following 146-residue polypeptide: 3-dehydroquinate dehydratase (146 aa).

The Proton acceptor role is filled by Tyr22. Residues Asn73, His79, and Asp86 each coordinate substrate. Residue His99 is the Proton donor of the active site. Substrate contacts are provided by residues 100–101 and Arg110; that span reads IS.

It belongs to the type-II 3-dehydroquinase family. As to quaternary structure, homododecamer.

The catalysed reaction is 3-dehydroquinate = 3-dehydroshikimate + H2O. It functions in the pathway metabolic intermediate biosynthesis; chorismate biosynthesis; chorismate from D-erythrose 4-phosphate and phosphoenolpyruvate: step 3/7. Its function is as follows. Catalyzes a trans-dehydration via an enolate intermediate. This Prochlorococcus marinus (strain MIT 9515) protein is 3-dehydroquinate dehydratase.